A 438-amino-acid polypeptide reads, in one-letter code: Na(+)/H(+) antiporter NhaA (438 aa).

Transmembrane regions (helical) follow at residues 23-43, 62-82, 104-124, 133-153, 162-182, 185-205, 212-232, 302-322, 337-357, 372-392, and 410-430; these read FGGI…NSFV, FFIG…LFFL, SFPV…YFFL, GFGI…MLLG, VFLI…IALF, TNLK…LALL, SLIP…QSGI, FLAP…NAGV, LGVI…ITFI, WWHI…SMFI, and IAIL…LFLL.

The protein belongs to the NhaA Na(+)/H(+) (TC 2.A.33) antiporter family.

It is found in the cell inner membrane. It catalyses the reaction Na(+)(in) + 2 H(+)(out) = Na(+)(out) + 2 H(+)(in). Na(+)/H(+) antiporter that extrudes sodium in exchange for external protons. This chain is Na(+)/H(+) antiporter NhaA, found in Helicobacter acinonychis (strain Sheeba).